The sequence spans 84 residues: Small ribosomal subunit protein bS20 (84 aa).

Residues 1–28 (MPNIKSAIKRVKTADTRNSRNASQRSAM) are disordered.

The protein belongs to the bacterial ribosomal protein bS20 family.

Its function is as follows. Binds directly to 16S ribosomal RNA. The protein is Small ribosomal subunit protein bS20 of Listeria welshimeri serovar 6b (strain ATCC 35897 / DSM 20650 / CCUG 15529 / CIP 8149 / NCTC 11857 / SLCC 5334 / V8).